The primary structure comprises 421 residues: Synaptotagmin-1 (421 aa).

Over 1 to 57 (MVSASRPEALAAPVTTVATLVPHNATEPASPGEGKEDAFSKLKQKFMNELHKIPLPP) the chain is Vesicular. A glycan (N-linked (GlcNAc...) asparagine) is linked at N24. The helical transmembrane segment at 58–79 (WALIAIAIVAVLLVVTCCFCVC) threads the bilayer. Residues C74, C75, C77, C79, and C82 are each lipidated (S-palmitoyl cysteine). Over 80-421 (KKCLFKKKNK…EVDAMLAVKK (342 aa)) the chain is Cytoplasmic. The segment at 112-141 (TMKDQALKDDDAETGLTDGEEKEEPKEEEK) is disordered. Positions 121 to 133 (DDAETGLTDGEEK) are enriched in acidic residues. T128 bears the Phosphothreonine mark. The tract at residues 135–381 (EPKEEEKLGK…AIGKVFVGYN (247 aa)) is phospholipid binding. The C2 1 domain maps to 141 to 260 (KLGKLQYSLD…DFGHVTEEWR (120 aa)). L171, D172, and D178 together coordinate Ca(2+). Y229 carries the phosphotyrosine modification. Residues D230, F231, D232, S235, K236, and D238 each coordinate Ca(2+). S264 is subject to Phosphoserine. Residues 272–405 (KLGDICFSLR…NPRRPIAQWH (134 aa)) form the C2 2 domain. D303 and D309 together coordinate Ca(2+). Phosphoserine is present on residues S342 and S344. Residues D363, D365, and D371 each coordinate Ca(2+).

The protein belongs to the synaptotagmin family. As to quaternary structure, homotetramer. Heterodimer; heterodimerizes with SYT2 in presence of calcium. Interacts with SCAMP5. Interacts with STON2. Forms a complex with SV2B, syntaxin 1 and SNAP25. Interacts with SV2A, SV2B and SV2C. Interacts with RIMS1. Interacts with PRRT2. Interacts with DNAJC5 in a phosphorylation-dependent manner. Interacts (via N-terminus) with RAB3A. Interacts with SYT12. Interacts with calmodulin. Interacts with DNM1 (via C-terminal proline-rich domain (PRD)); this interaction facilitates vesicle fission during clathrin-mediated endocytosis (CME). It depends on Ca(2+) as a cofactor. Glycosylated. As to expression, expressed in the brain and adrenal medulla (at protein level).

It is found in the cytoplasmic vesicle. It localises to the secretory vesicle membrane. The protein localises to the secretory vesicle. The protein resides in the synaptic vesicle membrane. Its subcellular location is the chromaffin granule membrane. It is found in the cytoplasm. In terms of biological role, calcium sensor that participates in triggering neurotransmitter release at the synapse. May have a regulatory role in the membrane interactions during trafficking of synaptic vesicles at the active zone of the synapse. It binds acidic phospholipids with a specificity that requires the presence of both an acidic head group and a diacyl backbone. A Ca(2+)-dependent interaction between synaptotagmin and putative receptors for activated protein kinase C has also been reported. It can bind to at least three additional proteins in a Ca(2+)-independent manner; these are neurexins, syntaxin and AP2. Plays a role in dendrite formation by melanocytes. This chain is Synaptotagmin-1, found in Mus musculus (Mouse).